The following is a 369-amino-acid chain: Cellular tumor antigen p53 (369 aa).

The transcription activation (acidic) stretch occupies residues 1–28; sequence MAESQEFAELWERNLISTQEAGTCWELI. A DNA-binding region spans residues 66–256; it reads DYPGEHGFKL…KTEESNFRKD (191 aa). 4 residues coordinate Zn(2+): Cys-140, His-143, Cys-202, and Cys-206. An interaction with DNA region spans residues 237 to 244; it reads RVCACPGR. The segment covering 246 to 263 has biased composition (basic and acidic residues); sequence RKTEESNFRKDQETKTLD. Disordered regions lie at residues 246–296 and 318–369; these read RKTE…SGSS and NDSL…SDSD. The span at 269–281 shows a compositional bias: polar residues; that stretch reads NKRSLTKDSTSSV. The short motif at 270-289 is the Bipartite nuclear localization signal element; it reads KRSLTKDSTSSVPRPEGSKK. The segment at 298–329 is oligomerization; it reads EEIYTLQVRGKERYEMLKKINDSLELSDVVPP. The Nuclear export signal signature appears at 312 to 323; it reads EMLKKINDSLEL. The tract at residues 342-365 is basic (repression of DNA-binding); sequence KGKKKDGQTPEPKRGKKLMVKDEK. Over residues 346–369 the composition is skewed to basic and acidic residues; sequence KDGQTPEPKRGKKLMVKDEKSDSD.

The protein belongs to the p53 family. In terms of assembly, binds DNA as a homotetramer. Zn(2+) is required as a cofactor.

Its subcellular location is the cytoplasm. The protein resides in the nucleus. Functionally, multifunctional transcription factor that induces cell cycle arrest, DNA repair or apoptosis upon binding to its target DNA sequence. Acts as a tumor suppressor in many tumor types; induces growth arrest or apoptosis depending on the physiological circumstances and cell type. Negatively regulates cell division by controlling expression of a set of genes required for this process. One of the activated genes is an inhibitor of cyclin-dependent kinases. Apoptosis induction seems to be mediated either by stimulation of BAX and FAS antigen expression, or by repression of Bcl-2 expression. This Barbus barbus (Barbel) protein is Cellular tumor antigen p53 (tp53).